The sequence spans 117 residues: Small nuclear ribonucleoprotein Sm D1 (117 aa).

A Sm domain is found at 2–74 (KLVRFLMKLT…IRYYILPDSL (73 aa)). The interval 81–117 (IDDSTKPKQKKKEVVRGRGRGRGRGTRGRGRGASRGF) is disordered. The span at 87–117 (PKQKKKEVVRGRGRGRGRGTRGRGRGASRGF) shows a compositional bias: basic residues.

This sequence belongs to the snRNP core protein family. In terms of assembly, belongs to the 40S cdc5-associated complex (or cwf complex), a spliceosome sub-complex reminiscent of a late-stage spliceosome composed of the U2, U5 and U6 snRNAs and at least brr2, cdc5, cwf2/prp3, cwf3/syf1, cwf4/syf3, cwf5/ecm2, spp42/cwf6, cwf7/spf27, cwf8, cwf9, cwf10, cwf11, cwf12, prp45/cwf13, cwf14, cwf15, cwf16, cwf17, cwf18, cwf19, cwf20, cwf21, cwf22, cwf23, cwf24, cwf25, cwf26, cyp7/cwf27, cwf28, cwf29/ist3, lea1, msl1, prp5/cwf1, prp10, prp12/sap130, prp17, prp22, sap61, sap62, sap114, sap145, slu7, smb1, smd1, smd3, smf1, smg1 and syf2. Interacts with saf5; the interaction is direct.

It localises to the nucleus. The protein localises to the cytoplasm. Functionally, plays a role in pre-mRNA splicing as a core component of the spliceosomal U1, U2, U4 and U5 small nuclear ribonucleoproteins (snRNPs), the building blocks of the spliceosome. The sequence is that of Small nuclear ribonucleoprotein Sm D1 (smd1) from Schizosaccharomyces pombe (strain 972 / ATCC 24843) (Fission yeast).